The primary structure comprises 77 residues: UPF0291 protein BLi02035/BL02933 (77 aa).

The interval 57–77 (PEGNDVTPEKLKQEKRNRRLH) is disordered.

The protein belongs to the UPF0291 family.

The protein localises to the cytoplasm. In Bacillus licheniformis (strain ATCC 14580 / DSM 13 / JCM 2505 / CCUG 7422 / NBRC 12200 / NCIMB 9375 / NCTC 10341 / NRRL NRS-1264 / Gibson 46), this protein is UPF0291 protein BLi02035/BL02933.